The primary structure comprises 440 residues: Lipopolysaccharide-processing protein LpsZ (440 aa).

It to E.coli capsule polysaccharide export protein KpsC.

It localises to the cytoplasm. In terms of biological role, involved in the invasion of nitrogen fixation nodules. May be involved in the biosynthesis of lipopolysaccharides as an enzyme or a regulatory protein. The protein is Lipopolysaccharide-processing protein LpsZ (lpsZ) of Rhizobium meliloti (Ensifer meliloti).